The chain runs to 207 residues: Thiamine-phosphate synthase (207 aa).

4-amino-2-methyl-5-(diphosphooxymethyl)pyrimidine is bound by residues 37–41 (QLREK) and N69. D70 and D89 together coordinate Mg(2+). A 4-amino-2-methyl-5-(diphosphooxymethyl)pyrimidine-binding site is contributed by S108. Residue 134 to 136 (TGS) coordinates 2-[(2R,5Z)-2-carboxy-4-methylthiazol-5(2H)-ylidene]ethyl phosphate. 4-amino-2-methyl-5-(diphosphooxymethyl)pyrimidine is bound at residue K137. 2-[(2R,5Z)-2-carboxy-4-methylthiazol-5(2H)-ylidene]ethyl phosphate contacts are provided by residues G165 and 185 to 186 (IS).

Belongs to the thiamine-phosphate synthase family. Mg(2+) serves as cofactor.

The enzyme catalyses 2-[(2R,5Z)-2-carboxy-4-methylthiazol-5(2H)-ylidene]ethyl phosphate + 4-amino-2-methyl-5-(diphosphooxymethyl)pyrimidine + 2 H(+) = thiamine phosphate + CO2 + diphosphate. It carries out the reaction 2-(2-carboxy-4-methylthiazol-5-yl)ethyl phosphate + 4-amino-2-methyl-5-(diphosphooxymethyl)pyrimidine + 2 H(+) = thiamine phosphate + CO2 + diphosphate. It catalyses the reaction 4-methyl-5-(2-phosphooxyethyl)-thiazole + 4-amino-2-methyl-5-(diphosphooxymethyl)pyrimidine + H(+) = thiamine phosphate + diphosphate. It participates in cofactor biosynthesis; thiamine diphosphate biosynthesis; thiamine phosphate from 4-amino-2-methyl-5-diphosphomethylpyrimidine and 4-methyl-5-(2-phosphoethyl)-thiazole: step 1/1. Condenses 4-methyl-5-(beta-hydroxyethyl)thiazole monophosphate (THZ-P) and 2-methyl-4-amino-5-hydroxymethyl pyrimidine pyrophosphate (HMP-PP) to form thiamine monophosphate (TMP). The polypeptide is Thiamine-phosphate synthase (Desulfitobacterium hafniense (strain Y51)).